Reading from the N-terminus, the 520-residue chain is Glutamyl-tRNA(Gln) amidotransferase subunit A (520 aa).

Catalysis depends on charge relay system residues Lys80 and Ser155. Catalysis depends on Ser179, which acts as the Acyl-ester intermediate.

The protein belongs to the amidase family. GatA subfamily. As to quaternary structure, heterotrimer of A, B and C subunits.

It carries out the reaction L-glutamyl-tRNA(Gln) + L-glutamine + ATP + H2O = L-glutaminyl-tRNA(Gln) + L-glutamate + ADP + phosphate + H(+). Its function is as follows. Allows the formation of correctly charged Gln-tRNA(Gln) through the transamidation of misacylated Glu-tRNA(Gln) in organisms which lack glutaminyl-tRNA synthetase. The reaction takes place in the presence of glutamine and ATP through an activated gamma-phospho-Glu-tRNA(Gln). The polypeptide is Glutamyl-tRNA(Gln) amidotransferase subunit A (Renibacterium salmoninarum (strain ATCC 33209 / DSM 20767 / JCM 11484 / NBRC 15589 / NCIMB 2235)).